The sequence spans 403 residues: S-adenosylmethionine synthase (403 aa).

His15 is a binding site for ATP. Asp17 provides a ligand contact to Mg(2+). Glu43 is a K(+) binding site. Glu56 and Gln99 together coordinate L-methionine. The tract at residues Gln99–Arg109 is flexible loop. ATP is bound by residues Asp166–Lys168, Lys232–Phe233, Asp241, Arg247–Lys248, Ala264, and Lys268. Position 241 (Asp241) interacts with L-methionine. Position 272 (Lys272) interacts with L-methionine.

The protein belongs to the AdoMet synthase family. Homotetramer; dimer of dimers. Requires Mg(2+) as cofactor. The cofactor is K(+).

The protein resides in the cytoplasm. The enzyme catalyses L-methionine + ATP + H2O = S-adenosyl-L-methionine + phosphate + diphosphate. It functions in the pathway amino-acid biosynthesis; S-adenosyl-L-methionine biosynthesis; S-adenosyl-L-methionine from L-methionine: step 1/1. Functionally, catalyzes the formation of S-adenosylmethionine (AdoMet) from methionine and ATP. The overall synthetic reaction is composed of two sequential steps, AdoMet formation and the subsequent tripolyphosphate hydrolysis which occurs prior to release of AdoMet from the enzyme. The sequence is that of S-adenosylmethionine synthase from Xanthomonas campestris pv. campestris (strain 8004).